We begin with the raw amino-acid sequence, 170 residues long: Adenine phosphoribosyltransferase (170 aa).

Belongs to the purine/pyrimidine phosphoribosyltransferase family. In terms of assembly, homodimer.

It is found in the cytoplasm. The enzyme catalyses AMP + diphosphate = 5-phospho-alpha-D-ribose 1-diphosphate + adenine. The protein operates within purine metabolism; AMP biosynthesis via salvage pathway; AMP from adenine: step 1/1. Catalyzes a salvage reaction resulting in the formation of AMP, that is energically less costly than de novo synthesis. This Streptococcus pneumoniae (strain Hungary19A-6) protein is Adenine phosphoribosyltransferase.